We begin with the raw amino-acid sequence, 572 residues long: Glutathione hydrolase 1 (572 aa).

Positions 1-22 are cleaved as a signal peptide; sequence MSLVRTVTIVLFIIAFLQNAAA. Position 99 (Arg99) interacts with L-glutamate. 2 N-linked (GlcNAc...) asparagine glycosylation sites follow: Asn171 and Asn222. The Nucleophile role is filled by Thr368. Residues Thr386, Asn388, Glu407, Asp410, 440–441, and 461–462 each bind L-glutamate; these read SS and GG. Residue Asn505 is glycosylated (N-linked (GlcNAc...) asparagine). A disordered region spans residues 552-572; sequence GGRSELVAVSDPRKGGFPSGY.

It belongs to the gamma-glutamyltransferase family. In terms of tissue distribution, expressed in embryo, roots and leaves. In mature plants, expression is restricted to vascular tissues of roots, leaves, flowers and siliques.

It is found in the secreted. It localises to the extracellular space. Its subcellular location is the apoplast. The catalysed reaction is an N-terminal (5-L-glutamyl)-[peptide] + an alpha-amino acid = 5-L-glutamyl amino acid + an N-terminal L-alpha-aminoacyl-[peptide]. It carries out the reaction glutathione + H2O = L-cysteinylglycine + L-glutamate. The enzyme catalyses an S-substituted glutathione + H2O = an S-substituted L-cysteinylglycine + L-glutamate. The protein operates within sulfur metabolism; glutathione metabolism. Functionally, may play a role in preventing oxidative stress by metabolizing extracellular oxidized glutathione (GSSG). The sequence is that of Glutathione hydrolase 1 (GGT1) from Arabidopsis thaliana (Mouse-ear cress).